The chain runs to 125 residues: Holo-[acyl-carrier-protein] synthase (125 aa).

2 residues coordinate Mg(2+): D8 and E57.

It belongs to the P-Pant transferase superfamily. AcpS family. Mg(2+) is required as a cofactor.

It localises to the cytoplasm. It catalyses the reaction apo-[ACP] + CoA = holo-[ACP] + adenosine 3',5'-bisphosphate + H(+). In terms of biological role, transfers the 4'-phosphopantetheine moiety from coenzyme A to a Ser of acyl-carrier-protein. The chain is Holo-[acyl-carrier-protein] synthase from Thermus thermophilus (strain ATCC BAA-163 / DSM 7039 / HB27).